The primary structure comprises 357 residues: Biotin synthase (357 aa).

The disordered stretch occupies residues 1 to 27 (MTTAETKPATETGENAGTTGTAGTAAT). The span at 9-27 (ATETGENAGTTGTAGTAAT) shows a compositional bias: low complexity. A Radical SAM core domain is found at 78-303 (DAVEMEGIIS…RQLLRFAGGR (226 aa)). [4Fe-4S] cluster is bound by residues Cys93, Cys97, and Cys100. [2Fe-2S] cluster is bound by residues Cys136, Cys228, and Arg298.

The protein belongs to the radical SAM superfamily. Biotin synthase family. As to quaternary structure, homodimer. [4Fe-4S] cluster is required as a cofactor. [2Fe-2S] cluster serves as cofactor.

It catalyses the reaction (4R,5S)-dethiobiotin + (sulfur carrier)-SH + 2 reduced [2Fe-2S]-[ferredoxin] + 2 S-adenosyl-L-methionine = (sulfur carrier)-H + biotin + 2 5'-deoxyadenosine + 2 L-methionine + 2 oxidized [2Fe-2S]-[ferredoxin]. It participates in cofactor biosynthesis; biotin biosynthesis; biotin from 7,8-diaminononanoate: step 2/2. In terms of biological role, catalyzes the conversion of dethiobiotin (DTB) to biotin by the insertion of a sulfur atom into dethiobiotin via a radical-based mechanism. This is Biotin synthase from Corynebacterium jeikeium (strain K411).